The sequence spans 186 residues: Adenine phosphoribosyltransferase (186 aa).

It belongs to the purine/pyrimidine phosphoribosyltransferase family. As to quaternary structure, homodimer.

The protein resides in the cytoplasm. It carries out the reaction AMP + diphosphate = 5-phospho-alpha-D-ribose 1-diphosphate + adenine. Its pathway is purine metabolism; AMP biosynthesis via salvage pathway; AMP from adenine: step 1/1. Its function is as follows. Catalyzes a salvage reaction resulting in the formation of AMP, that is energically less costly than de novo synthesis. This chain is Adenine phosphoribosyltransferase, found in Xanthomonas campestris pv. campestris (strain B100).